The primary structure comprises 187 residues: High affinity copper uptake protein 1 (187 aa).

The Extracellular portion of the chain corresponds to 1–65 (MRMNHMEMHH…SSLVINTPGE (65 aa)). Positions 9 to 10 (HH) match the Bis-His motif motif. A glycan (N-linked (GlcNAc...) asparagine) is linked at N19. O-linked (GalNAc...) threonine glycosylation occurs at T30. The chain crosses the membrane as a helical span at residues 66–86 (MAGAFVAVFLLAMFYEGLKIA). Residues 87–129 (REGLLRKSQVSIRYNSMPVPGPNGTILMETHKTVGQQMLSFPH) are Cytoplasmic-facing. Position 111 is a phosphothreonine (T111). A helical membrane pass occupies residues 130 to 150 (LLQTVLHIIQVVISYFLMLIF). Topologically, residues 151 to 153 (MTY) are extracellular. The chain crosses the membrane as a helical span at residues 154–174 (NGYLCIAVAAGAGTGYFLFSW). At 175 to 187 (KKAVVVDITEHCH) the chain is on the cytoplasmic side. C186 carries the cysteine sulfenic acid (-SOH) modification.

Belongs to the copper transporter (Ctr) (TC 1.A.56) family. SLC31A subfamily. Homotrimer; is stabilized by cisplatin via interactions between cisplatin and the methionine-rich clusters, and could be crucial for the copper(2+) reduction process and copper(1+) stabilization. Heterotrimer between SLC31A1, CCS and SOD1; this heterotrimer is copper(1+)-mediated and its maintenance is regulated through SOD1 activation. Interacts with KDR; this interaction is induced upon VEGFA stimulation leading to SLC31A1 and KDR subsequent co-internalization to early endosomes, thereby activating KDR downstream signaling in endothelial cells. Interacts (via C-terminal domain) with ATOX1 (via dimer form); this interaction improves ATOX1 stability and controls intracellular copper(1+) levels. Interacts with SLC31A2; this interaction stabilizes SLC31A2 and protects its from ubiquitination and degradation. Interacts (via C-terminal domain) with CCS; this interaction is copper(1+)-mediated. O-Glycosylation at Thr-30 protects from proteolytic cleavage in the N-terminal extracellular domain. In terms of processing, proteolytic cleavage, leading to a truncated form, is facilitated by SLC31A2 and initiated preferentially by CTSL and to a minor extend by CTSB in endolysosomal compartments. A post-CTSL/cathepsin L processing occurs to yield to the fully truncated form. Post-translationally, sulfenylated at Cys-186 after stimulation with VEGFA, which induces SLC31A1-KDR disulfide bond formation and their co-internalization to early endosomes, driving to a sustained VEGFR2 signaling.

It localises to the cell membrane. The protein resides in the early endosome membrane. It is found in the recycling endosome membrane. The protein localises to the apical cell membrane. Its subcellular location is the late endosome membrane. It localises to the basolateral cell membrane. It carries out the reaction Cu(+)(out) = Cu(+)(in). The enzyme catalyses Ag(+)(out) = Ag(+)(in). Its activity is regulated as follows. Copper uptake is inhibited by cold temperature, silver and zinc ions. Platinum-containing chemotherapeutic agents uptake is inhibited by cold temperature and copper. Uniporter that mediates the transport of copper(1+) from the extracellular space to the cytoplasm, across the plasma membrane. Then, delivers directly copper(1+) to specific chaperone such as ATOX1, via a copper(1+)- mediated transient interaction between the C-terminal domain and a copper(1+) chaperone, thus controlling intracellular copper(1+) levels. May function in copper(1+) import from the apical membrane thus may drive intestinal copper absorption. The copper(1+) transport mechanism is sodium-independent, saturable and of high-affinity. Also mediates the uptake of silver(1+). May function in the influx of the platinum-containing chemotherapeutic agents. The platinum-containing chemotherapeutic agents uptake is saturable. Also participates in the first step of copper(2+) acquisition by cells through a direct transfer of copper(2+) from copper(2+) carriers in blood, such as ALB to the N-terminal domain of SLC31A1, leading to copper(2+) reduction and probably followed by copper(1+) stabilization. In addition, functions as a redox sensor to promote angiogenesis in endothelial cells, in a copper(1+) transport independent manner, by transmitting the VEGF-induced ROS signal through a sulfenylation at Cys-189 leading to a subsequent disulfide bond formation between SLC31A1 and KDR. The SLC31A1-KDR complex is then co-internalized to early endosomes, driving a sustained VEGFR2 signaling. In terms of biological role, mobilizes copper(1+) out of the endosomal compartment, making copper(1+) available for export out of the cells. This is High affinity copper uptake protein 1 from Rattus norvegicus (Rat).